A 313-amino-acid polypeptide reads, in one-letter code: Probable cell division protein WhiA (313 aa).

Residues 276 to 309 (SLKELGEMLHPKLGKSGVNHRLRKLDEIAERIRK) constitute a DNA-binding region (H-T-H motif).

This sequence belongs to the WhiA family.

Its function is as follows. Involved in cell division and chromosome segregation. This chain is Probable cell division protein WhiA, found in Ruminiclostridium cellulolyticum (strain ATCC 35319 / DSM 5812 / JCM 6584 / H10) (Clostridium cellulolyticum).